Consider the following 188-residue polypeptide: GTPase KRas (188 aa).

Residues 10–18 (GAGGVGKSA), 29–35 (VDEYDPT), 59–60 (AG), and 116–119 (NKCD) contribute to the GTP site. Positions 32-40 (YDPTIEDSY) match the Effector region motif. The interval 167-188 (KEKMSKEGKKKKKKSKTKCILM) is disordered. Cys-185 bears the Cysteine methyl ester mark. Cys-185 carries the S-farnesyl cysteine lipid modification. Positions 186–188 (ILM) are cleaved as a propeptide — removed in mature form.

This sequence belongs to the small GTPase superfamily. Ras family.

It is found in the cell membrane. The protein localises to the cytoplasm. The catalysed reaction is GTP + H2O = GDP + phosphate + H(+). Its activity is regulated as follows. Alternates between an inactive form bound to GDP and an active form bound to GTP. Activated by a guanine nucleotide-exchange factor (GEF) and inactivated by a GTPase-activating protein (GAP). Ras proteins bind GDP/GTP and possess intrinsic GTPase activity. Plays an important role in the regulation of cell proliferation. This is GTPase KRas (kras1) from Oryzias latipes (Japanese rice fish).